Consider the following 376-residue polypeptide: Erythronate-4-phosphate dehydrogenase (376 aa).

Residues S45 and T67 each coordinate substrate. An NAD(+)-binding site is contributed by D147. R209 is an active-site residue. Residue D233 participates in NAD(+) binding. E238 is an active-site residue. Residue H255 is the Proton donor of the active site. G258 provides a ligand contact to NAD(+). Y259 contributes to the substrate binding site.

Belongs to the D-isomer specific 2-hydroxyacid dehydrogenase family. PdxB subfamily. In terms of assembly, homodimer.

The protein resides in the cytoplasm. It catalyses the reaction 4-phospho-D-erythronate + NAD(+) = (R)-3-hydroxy-2-oxo-4-phosphooxybutanoate + NADH + H(+). The protein operates within cofactor biosynthesis; pyridoxine 5'-phosphate biosynthesis; pyridoxine 5'-phosphate from D-erythrose 4-phosphate: step 2/5. Catalyzes the oxidation of erythronate-4-phosphate to 3-hydroxy-2-oxo-4-phosphonooxybutanoate. In Shewanella sp. (strain W3-18-1), this protein is Erythronate-4-phosphate dehydrogenase.